We begin with the raw amino-acid sequence, 196 residues long: FMN-dependent NADH:quinone oxidoreductase (196 aa).

Residues Ser-10, 16–18 (SQS), 93–96 (MYNF), and 137–140 (TRGG) contribute to the FMN site.

The protein belongs to the azoreductase type 1 family. As to quaternary structure, homodimer. Requires FMN as cofactor.

The catalysed reaction is 2 a quinone + NADH + H(+) = 2 a 1,4-benzosemiquinone + NAD(+). It catalyses the reaction N,N-dimethyl-1,4-phenylenediamine + anthranilate + 2 NAD(+) = 2-(4-dimethylaminophenyl)diazenylbenzoate + 2 NADH + 2 H(+). In terms of biological role, quinone reductase that provides resistance to thiol-specific stress caused by electrophilic quinones. Functionally, also exhibits azoreductase activity. Catalyzes the reductive cleavage of the azo bond in aromatic azo compounds to the corresponding amines. The sequence is that of FMN-dependent NADH:quinone oxidoreductase from Shewanella amazonensis (strain ATCC BAA-1098 / SB2B).